The primary structure comprises 462 residues: Argininosuccinate lyase (462 aa).

This sequence belongs to the lyase 1 family. Argininosuccinate lyase subfamily.

The protein localises to the cytoplasm. It catalyses the reaction 2-(N(omega)-L-arginino)succinate = fumarate + L-arginine. It participates in amino-acid biosynthesis; L-arginine biosynthesis; L-arginine from L-ornithine and carbamoyl phosphate: step 3/3. The protein is Argininosuccinate lyase of Rippkaea orientalis (strain PCC 8801 / RF-1) (Cyanothece sp. (strain PCC 8801)).